The sequence spans 95 residues: Opiscorpine-4 (95 aa).

An N-terminal signal peptide occupies residues 1 to 19 (MNNKLTALIFLGLLAIASC). In terms of domain architecture, BetaSPN-type CS-alpha/beta spans 55-95 (EFMCVANIDMTKSCDTHCQKASGEKGYCHGTKCKCGVPLSY). 3 disulfide bridges follow: C58-C82, C68-C87, and C72-C89.

The protein belongs to the long chain scorpion toxin family. Class 3 subfamily. In terms of tissue distribution, expressed by the venom gland.

It is found in the secreted. Its function is as follows. Has antimicrobial activity against yeasts and bacteria. The chain is Opiscorpine-4 from Opistophthalmus carinatus (African yellow leg scorpion).